We begin with the raw amino-acid sequence, 393 residues long: Ninja-family protein 1 (393 aa).

Disordered regions lie at residues 1-27 (MEGFSRDLLCGIGKGDAPPPEKRPGQL) and 155-200 (NDDW…KEMN). The segment covering 156-170 (DDWKKRKEAQSLKRL) has biased composition (basic and acidic residues).

This sequence belongs to the Ninja family.

The protein localises to the nucleus. The protein is Ninja-family protein 1 of Zea mays (Maize).